The chain runs to 319 residues: Glucokinase (319 aa).

An ATP-binding site is contributed by 8–13 (GDIGGT).

It belongs to the bacterial glucokinase family.

It localises to the cytoplasm. It carries out the reaction D-glucose + ATP = D-glucose 6-phosphate + ADP + H(+). The sequence is that of Glucokinase from Chromohalobacter salexigens (strain ATCC BAA-138 / DSM 3043 / CIP 106854 / NCIMB 13768 / 1H11).